The sequence spans 535 residues: Portal protein (535 aa).

Belongs to the podoviridae portal protein family. As to quaternary structure, homododecamer. Interacts with major capsid protein. Interacts with the tail tube proteins gp11 and gp12. Interacts with the terminase large subunit. Interacts with the internal virion protein gp14.

Its subcellular location is the virion. Functionally, forms the portal vertex of the capsid. This portal plays critical roles in head assembly, genome packaging, neck/tail attachment, and genome ejection. The portal protein multimerizes as a single ring-shaped homododecamer arranged around a central channel. The polypeptide is Portal protein (8) (Enterobacteria phage T3 (Bacteriophage T3)).